We begin with the raw amino-acid sequence, 234 residues long: Urease accessory protein UreG 1 (234 aa).

The interval 1-29 (MTRTPTGVPMHLGHTHDAPAAVSADATRP) is disordered. 42–49 (GPVGSGKT) contributes to the GTP binding site.

It belongs to the SIMIBI class G3E GTPase family. UreG subfamily. Homodimer. UreD, UreF and UreG form a complex that acts as a GTP-hydrolysis-dependent molecular chaperone, activating the urease apoprotein by helping to assemble the nickel containing metallocenter of UreC. The UreE protein probably delivers the nickel.

It localises to the cytoplasm. Its function is as follows. Facilitates the functional incorporation of the urease nickel metallocenter. This process requires GTP hydrolysis, probably effectuated by UreG. The polypeptide is Urease accessory protein UreG 1 (Streptomyces griseus subsp. griseus (strain JCM 4626 / CBS 651.72 / NBRC 13350 / KCC S-0626 / ISP 5235)).